The primary structure comprises 510 residues: NAD(P)H-quinone oxidoreductase subunit 2 A, chloroplastic (510 aa).

A run of 13 helical transmembrane segments spans residues 31-51 (FIFP…IDLT), 57-77 (TPWL…ALLF), 99-119 (IFQF…VEYI), 124-144 (MAIT…MFLC), 149-169 (LITI…LSGY), 183-203 (YLLM…WLYG), 229-249 (ISIA…PAPF), 295-315 (WHLL…LIAI), 323-343 (MLAY…IVGD), 354-374 (YMLF…LFGL), 395-415 (ALSS…AGFF), 418-438 (LYLF…IGLL), and 484-504 (MIVC…IIAI).

This sequence belongs to the complex I subunit 2 family. In terms of assembly, NDH is composed of at least 16 different subunits, 5 of which are encoded in the nucleus.

It is found in the plastid. Its subcellular location is the chloroplast thylakoid membrane. It catalyses the reaction a plastoquinone + NADH + (n+1) H(+)(in) = a plastoquinol + NAD(+) + n H(+)(out). It carries out the reaction a plastoquinone + NADPH + (n+1) H(+)(in) = a plastoquinol + NADP(+) + n H(+)(out). Functionally, NDH shuttles electrons from NAD(P)H:plastoquinone, via FMN and iron-sulfur (Fe-S) centers, to quinones in the photosynthetic chain and possibly in a chloroplast respiratory chain. The immediate electron acceptor for the enzyme in this species is believed to be plastoquinone. Couples the redox reaction to proton translocation, and thus conserves the redox energy in a proton gradient. This chain is NAD(P)H-quinone oxidoreductase subunit 2 A, chloroplastic, found in Nymphaea alba (White water-lily).